The chain runs to 468 residues: Cysteine--tRNA ligase (468 aa).

Residue Cys27 coordinates Zn(2+). The 'HIGH' region motif lies at Pro29–His39. Cys204, His234, and Glu238 together coordinate Zn(2+). Positions Lys266 to Ser270 match the 'KMSKS' region motif. Lys269 lines the ATP pocket.

The protein belongs to the class-I aminoacyl-tRNA synthetase family. As to quaternary structure, monomer. The cofactor is Zn(2+).

It localises to the cytoplasm. The enzyme catalyses tRNA(Cys) + L-cysteine + ATP = L-cysteinyl-tRNA(Cys) + AMP + diphosphate. The protein is Cysteine--tRNA ligase of Campylobacter hominis (strain ATCC BAA-381 / DSM 21671 / CCUG 45161 / LMG 19568 / NCTC 13146 / CH001A).